The primary structure comprises 79 residues: DNA-directed RNA polymerase subunit omega (79 aa).

It belongs to the RNA polymerase subunit omega family. In terms of assembly, the RNAP catalytic core consists of 2 alpha, 1 beta, 1 beta' and 1 omega subunit. When a sigma factor is associated with the core the holoenzyme is formed, which can initiate transcription.

It catalyses the reaction RNA(n) + a ribonucleoside 5'-triphosphate = RNA(n+1) + diphosphate. In terms of biological role, promotes RNA polymerase assembly. Latches the N- and C-terminal regions of the beta' subunit thereby facilitating its interaction with the beta and alpha subunits. This chain is DNA-directed RNA polymerase subunit omega, found in Kosmotoga olearia (strain ATCC BAA-1733 / DSM 21960 / TBF 19.5.1).